Here is a 328-residue protein sequence, read N- to C-terminus: Cytochrome f (328 aa).

Residues 1–44 (MRTPDFSAIWQASKQLTARIILLAFATFALYVFHDLAFPQGAAA) form the signal peptide. Residues Tyr-45, Cys-66, Cys-69, and His-70 each contribute to the heme site. The chain crosses the membrane as a helical span at residues 294-314 (IKGLMVFLAGIMLAQILLVIK).

This sequence belongs to the cytochrome f family. As to quaternary structure, the 4 large subunits of the cytochrome b6-f complex are cytochrome b6, subunit IV (17 kDa polypeptide, PetD), cytochrome f and the Rieske protein, while the 4 small subunits are PetG, PetL, PetM and PetN. The complex functions as a dimer. It depends on heme as a cofactor.

It is found in the cellular thylakoid membrane. Functionally, component of the cytochrome b6-f complex, which mediates electron transfer between photosystem II (PSII) and photosystem I (PSI), cyclic electron flow around PSI, and state transitions. The chain is Cytochrome f from Rippkaea orientalis (strain PCC 8801 / RF-1) (Cyanothece sp. (strain PCC 8801)).